The chain runs to 299 residues: Formamidopyrimidine-DNA glycosylase (299 aa).

Catalysis depends on proline 2, which acts as the Schiff-base intermediate with DNA. Glutamate 3 serves as the catalytic Proton donor. The active-site Proton donor; for beta-elimination activity is the lysine 58. DNA contacts are provided by histidine 106, arginine 125, and lysine 168. An FPG-type zinc finger spans residues 259–295; the sequence is RVYDRVGHACPTKGCTGRVGRIVQGGRSTFFCETCQV. The Proton donor; for delta-elimination activity role is filled by arginine 285.

This sequence belongs to the FPG family. As to quaternary structure, monomer. It depends on Zn(2+) as a cofactor.

It carries out the reaction Hydrolysis of DNA containing ring-opened 7-methylguanine residues, releasing 2,6-diamino-4-hydroxy-5-(N-methyl)formamidopyrimidine.. The enzyme catalyses 2'-deoxyribonucleotide-(2'-deoxyribose 5'-phosphate)-2'-deoxyribonucleotide-DNA = a 3'-end 2'-deoxyribonucleotide-(2,3-dehydro-2,3-deoxyribose 5'-phosphate)-DNA + a 5'-end 5'-phospho-2'-deoxyribonucleoside-DNA + H(+). Functionally, involved in base excision repair of DNA damaged by oxidation or by mutagenic agents. Acts as a DNA glycosylase that recognizes and removes damaged bases. Has a preference for oxidized purines, such as 7,8-dihydro-8-oxoguanine (8-oxoG). Has AP (apurinic/apyrimidinic) lyase activity and introduces nicks in the DNA strand. Cleaves the DNA backbone by beta-delta elimination to generate a single-strand break at the site of the removed base with both 3'- and 5'-phosphates. This Methylorubrum extorquens (strain CM4 / NCIMB 13688) (Methylobacterium extorquens) protein is Formamidopyrimidine-DNA glycosylase.